A 127-amino-acid polypeptide reads, in one-letter code: Promotilin (127 aa).

A signal peptide spans 1–25 (MLSRKAVAALLLVHVTAMLASQTEG). A disordered region spans residues 41-67 (REQNKRLRKSLRVQQRSKAAGRLEPQE).

It belongs to the motilin family. In terms of tissue distribution, present in the gut mucosa with the exception of the gastric corpus. Also present in medulla oblongata, nucleus of the solitary tract, hypophysis, spinal cord, hypothalamus, and cerebellum but not in the cerebral cortex.

The protein resides in the secreted. Its function is as follows. Plays an important role in the regulation of interdigestive gastrointestinal motility and indirectly causes rhythmic contraction of duodenal and colonic smooth muscle. This Cavia porcellus (Guinea pig) protein is Promotilin (MLN).